A 420-amino-acid polypeptide reads, in one-letter code: uncharacterized protein (420 aa).

The next 6 helical transmembrane spans lie at Ile26–Ile46, Ser66–Phe86, Val231–Leu251, Ile276–Leu296, Gly317–Phe337, and Ile369–Ile389.

It belongs to the CbiQ family.

The protein localises to the cell membrane. This is an uncharacterized protein from Mycoplasma genitalium (strain ATCC 33530 / DSM 19775 / NCTC 10195 / G37) (Mycoplasmoides genitalium).